A 231-amino-acid chain; its full sequence is Ribosomal RNA small subunit methyltransferase G (231 aa).

S-adenosyl-L-methionine-binding positions include Gly-75, Phe-80, 126-127, and Arg-142; that span reads AE.

The protein belongs to the methyltransferase superfamily. RNA methyltransferase RsmG family.

It localises to the cytoplasm. Its function is as follows. Specifically methylates the N7 position of a guanine in 16S rRNA. The protein is Ribosomal RNA small subunit methyltransferase G of Mycoplasma capricolum subsp. capricolum (strain California kid / ATCC 27343 / NCTC 10154).